A 348-amino-acid polypeptide reads, in one-letter code: Dihydroorotase (348 aa).

Zn(2+) contacts are provided by H17 and H19. Substrate is bound by residues 19–21 and N45; that span reads HLR. Zn(2+) contacts are provided by K103, H140, and H178. An N6-carboxylysine modification is found at K103. Substrate is bound at residue H140. Position 223 (L223) interacts with substrate. D251 lines the Zn(2+) pocket. The active site involves D251. Residues H255 and A267 each contribute to the substrate site.

This sequence belongs to the metallo-dependent hydrolases superfamily. DHOase family. Class II DHOase subfamily. As to quaternary structure, homodimer. Requires Zn(2+) as cofactor.

It carries out the reaction (S)-dihydroorotate + H2O = N-carbamoyl-L-aspartate + H(+). It functions in the pathway pyrimidine metabolism; UMP biosynthesis via de novo pathway; (S)-dihydroorotate from bicarbonate: step 3/3. In terms of biological role, catalyzes the reversible cyclization of carbamoyl aspartate to dihydroorotate. The chain is Dihydroorotase from Salmonella paratyphi C (strain RKS4594).